We begin with the raw amino-acid sequence, 676 residues long: MDSIHPFIYDLIVVGAGHAGCEAAHAAARMGCRTLLLTIDLDKLAHMSCNPSIGGPAKGHLVREIDALGGLMGRVTDRTFIQIRLLNESKGPAVQAPRAQADKRLYAKVMKETLETTPNLDLRQAMIERILLPQPPGRNGSAAPADDPAGVQPGHYAVITHTRRVYQSRALVLTTGTFLRGRAITGEAIWGAGRAGEAPATALGEDLAALGFPLVRLKTGTPPRIDARTIDFSQTSVQQGSPTPLFFGHYYRVLGEIPPEPAFTGAPACAYPEPLRAAWRPQLPCYLVHTTPEFHEIVRRNLDRAPLFSGIIEGVGPRYCPSIEDKIVRFADKERHGLFLEPEGWSTHEVYVQGCNTSLPEDVQWAMLRSIPALRRVELMRAGYAIEYDALATGEIAADMSSRRIPGLFFAGQINGTTGYEEAAAQGLMAGINAARFIQGKPPIILRRDEAYIGVLIDDLITKEIREPYRMFTSRAEHRLLLRTDNADLRLTRLAGELGLVDRERVEAVERKREESERLLRVLRGQRLFPSAATNARLSDVGIAPLSSEMSAEDVLRRPEVRYEQLRQALDLPACDADIAEQVEIEAKYGGYLQKQQREVERLRRMEARRIPPDFDFTALRGLRNEARQTLQRFRPATVGQAARLAGINPADVAILIVALERRGRRDMALDVRSGA.

Residue 15-20 (GAGHAG) participates in FAD binding. Residue 316 to 330 (GPRYCPSIEDKIVRF) participates in NAD(+) binding.

The protein belongs to the MnmG family. Homodimer. Heterotetramer of two MnmE and two MnmG subunits. It depends on FAD as a cofactor.

The protein resides in the cytoplasm. In terms of biological role, NAD-binding protein involved in the addition of a carboxymethylaminomethyl (cmnm) group at the wobble position (U34) of certain tRNAs, forming tRNA-cmnm(5)s(2)U34. The sequence is that of tRNA uridine 5-carboxymethylaminomethyl modification enzyme MnmG from Roseiflexus castenholzii (strain DSM 13941 / HLO8).